A 104-amino-acid chain; its full sequence is Alpha-amylase inhibitor HOE-467A (104 aa).

A signal peptide spans 1-30; sequence MRVRALRLAALVGAGAALALSPLAAGPASA. Disulfide bonds link Cys-41-Cys-57 and Cys-75-Cys-103.

Inhibits mammalian alpha-amylases specifically but has no action on plant and microbial alpha-amylases. Forms a tight stoichiometric 1:1 complex with alpha-amylase. The sequence is that of Alpha-amylase inhibitor HOE-467A from Streptomyces tendae.